A 170-amino-acid polypeptide reads, in one-letter code: MRCPFCGTQDTKVVDSRLVSEGAQVRRRRTCIHCQERFTTFEVAELQMPKLIKSDGSREAFDEDKLRNGIIKAIEKRPVSIEAVETAITRIKEKMQATGERELPSRWTGEAVMEELQRLDQVAYVRFASVYRSFKDISEFREAIDRLESHSVSIPKSKKTAPESKKEDQA.

A zinc finger lies at 3-34 (CPFCGTQDTKVVDSRLVSEGAQVRRRRTCIHC). The 91-residue stretch at 49–139 (PKLIKSDGSR…VYRSFKDISE (91 aa)) folds into the ATP-cone domain. The disordered stretch occupies residues 151–170 (SVSIPKSKKTAPESKKEDQA). The span at 160–170 (TAPESKKEDQA) shows a compositional bias: basic and acidic residues.

The protein belongs to the NrdR family. Zn(2+) is required as a cofactor.

In terms of biological role, negatively regulates transcription of bacterial ribonucleotide reductase nrd genes and operons by binding to NrdR-boxes. This is Transcriptional repressor NrdR from Marinomonas sp. (strain MWYL1).